The sequence spans 293 residues: Proteinase T (293 aa).

A propeptide spanning residues 1–12 is cleaved from the precursor; that stretch reads EFIEQDAVVTIS. One can recognise a Peptidase S8 domain in the interval 19–293; it reads PWGLARISSQ…VLINNGEGSA (275 aa). 2 disulfides stabilise this stretch: Cys-46–Cys-137 and Cys-192–Cys-262. Active-site charge relay system residues include Asp-51, His-83, and Ser-238.

Belongs to the peptidase S8 family.

In terms of biological role, serine proteinase. This Parengyodontium album (Tritirachium album) protein is Proteinase T (PROT).